The sequence spans 570 residues: Double-stranded RNA-binding protein Staufen homolog 2 (570 aa).

The region spanning 8–75 is the DRBM 1 domain; the sequence is TAMCLVNELA…ANKALTESTL (68 aa). Disordered stretches follow at residues 71–94 and 181–203; these read TEST…PGSI and NEPI…DDKD. Residues 83–94 are compositionally biased toward polar residues; sequence PKSNVNNNPGSI. A DRBM 2 domain is found at 95 to 181; sequence TPTVELNGLA…AMKALQALQN (87 aa). At serine 188 the chain carries Phosphoserine. The segment covering 194–203 has biased composition (basic and acidic residues); it reads SGKDVDDDKD. DRBM domains lie at 207–274 and 307–375; these read SEIS…ELKK and NPIS…QLGY. 2 short sequence motifs (nuclear localization signal) span residues 273–291 and 373–412; these read KKLP…FKKR and LGYK…PKGI. Residues 381–570 are required for dendritic transport; the sequence is LQDQLEKTGE…QDCKKSNSAV (190 aa). Residues 387 to 409 form a disordered region; sequence KTGENKGWSGPKPGFPEPTNNTP. Serine 395 bears the Phosphoserine mark. The residue at position 405 (threonine 405) is a Phosphothreonine. Phosphoserine is present on residues serine 416, serine 426, serine 440, serine 455, and serine 492. The tract at residues 528-570 is disordered; it reads DGAMNIEKGSLEKQAKHLREKADNNQAPPGSIAQDCKKSNSAV. The span at 536 to 550 shows a compositional bias: basic and acidic residues; it reads GSLEKQAKHLREKAD.

As to quaternary structure, interacts with the exportin XPO5. This requires RNA and RAN bound to GTP. Interacts with microtubules. Isoform 2 and isoform 3 may also interact with ribosomes, and this association is independent of translation. Identified in a mRNP complex, at least composed of DHX9, DDX3X, ELAVL1, HNRNPU, IGF2BP1, ILF3, PABPC1, PCBP2, PTBP2, STAU1, STAU2, SYNCRIP and YBX1. Interacts with TRIM71 (via NHL repeats) in an RNA-dependent manner.

The protein localises to the cytoplasm. The protein resides in the nucleus. It is found in the nucleolus. Its subcellular location is the endoplasmic reticulum. In terms of biological role, RNA-binding protein required for the microtubule-dependent transport of neuronal RNA from the cell body to the dendrite. As protein synthesis occurs within the dendrite, the localization of specific mRNAs to dendrites may be a prerequisite for neurite outgrowth and plasticity at sites distant from the cell body. The chain is Double-stranded RNA-binding protein Staufen homolog 2 (STAU2) from Homo sapiens (Human).